A 372-amino-acid chain; its full sequence is tRNA-specific 2-thiouridylase MnmA (372 aa).

Residues glycine 16–serine 23 and methionine 42 each bind ATP. The interval asparagine 102–aspartate 104 is interaction with target base in tRNA. The active-site Nucleophile is the cysteine 107. Cysteine 107 and cysteine 205 form a disulfide bridge. Glycine 132 contributes to the ATP binding site. An interaction with tRNA region spans residues lysine 155–glutamine 157. Residue cysteine 205 is the Cysteine persulfide intermediate of the active site. The segment at arginine 317–tyrosine 318 is interaction with tRNA.

Belongs to the MnmA/TRMU family.

It localises to the cytoplasm. It catalyses the reaction S-sulfanyl-L-cysteinyl-[protein] + uridine(34) in tRNA + AH2 + ATP = 2-thiouridine(34) in tRNA + L-cysteinyl-[protein] + A + AMP + diphosphate + H(+). Catalyzes the 2-thiolation of uridine at the wobble position (U34) of tRNA, leading to the formation of s(2)U34. This Shewanella sp. (strain ANA-3) protein is tRNA-specific 2-thiouridylase MnmA.